A 337-amino-acid polypeptide reads, in one-letter code: MGFTVALIQGDGIGPEIVSKSKRILAKINELYSLPIEYIEVEAGDRALARYGEALPKDSLKIIDKADIILKGPVGESAADVVVKLRQIYDMYANIRPAKSIPGIDTKYGNVDILIVRENTEDLYKGFEHIVSDGVAVGMKIITRFASERIAKVGLNFALRRRKKVTCVHKANVMRITDGLFAEACRSVLKGKVEYSEMYVDAAAANLVRNPQMFDVIVTENVYGDILSDEASQIAGSLGIAPSANIGDKKALFEPVHGAAFDIAGKNIGNPTAFLLSVSMMYERMYELSNDDRYIKASRALENAIYLVYKERKALTPDVGGNATTDDLINEIYNKLG.

Substrate is bound by residues Arg-86, Arg-96, Arg-117, and Asp-201. Mg(2+) contacts are provided by Asp-201, Asp-225, and Asp-229. Residue 258–270 (GAAFDIAGKNIGN) participates in NAD(+) binding.

Belongs to the isocitrate and isopropylmalate dehydrogenases family. Homotetramer. Mg(2+) is required as a cofactor. Requires Mn(2+) as cofactor.

The protein localises to the cytoplasm. It carries out the reaction (2R,3S)-3-isopropylmalate + NAD(+) = 4-methyl-2-oxopentanoate + CO2 + NADH. It participates in amino-acid biosynthesis; L-leucine biosynthesis; L-leucine from 3-methyl-2-oxobutanoate: step 3/4. Catalyzes the oxidation of 3-carboxy-2-hydroxy-4-methylpentanoate (3-isopropylmalate) to 3-carboxy-4-methyl-2-oxopentanoate. The product decarboxylates to 4-methyl-2 oxopentanoate. The sequence is that of 3-isopropylmalate dehydrogenase (leuB) from Sulfurisphaera tokodaii (strain DSM 16993 / JCM 10545 / NBRC 100140 / 7) (Sulfolobus tokodaii).